The sequence spans 312 residues: Ribose-phosphate pyrophosphokinase (312 aa).

ATP-binding positions include 34–36 and 93–94; these read DQE and RQ. Positions 127 and 167 each coordinate Mg(2+). Lys-191 is an active-site residue. D-ribose 5-phosphate is bound by residues Arg-193, Asp-217, and 221-225; that span reads DSGGT.

Belongs to the ribose-phosphate pyrophosphokinase family. Class I subfamily. In terms of assembly, homohexamer. The cofactor is Mg(2+).

Its subcellular location is the cytoplasm. It catalyses the reaction D-ribose 5-phosphate + ATP = 5-phospho-alpha-D-ribose 1-diphosphate + AMP + H(+). It participates in metabolic intermediate biosynthesis; 5-phospho-alpha-D-ribose 1-diphosphate biosynthesis; 5-phospho-alpha-D-ribose 1-diphosphate from D-ribose 5-phosphate (route I): step 1/1. In terms of biological role, involved in the biosynthesis of the central metabolite phospho-alpha-D-ribosyl-1-pyrophosphate (PRPP) via the transfer of pyrophosphoryl group from ATP to 1-hydroxyl of ribose-5-phosphate (Rib-5-P). In Hyphomonas neptunium (strain ATCC 15444), this protein is Ribose-phosphate pyrophosphokinase.